The sequence spans 273 residues: F-actin-capping protein subunit alpha (273 aa).

The protein belongs to the F-actin-capping protein alpha subunit family. Component of the F-actin capping complex, composed of a heterodimer of an alpha and a beta subunit.

It is found in the cytoplasm. Its subcellular location is the cytoskeleton. It localises to the actin patch. F-actin-capping proteins bind in a Ca(2+)-independent manner to the fast growing ends of actin filaments (barbed end) thereby blocking the exchange of subunits at these ends. Unlike other capping proteins (such as gelsolin and severin), these proteins do not sever actin filaments. The chain is F-actin-capping protein subunit alpha (cap1) from Aspergillus oryzae (strain ATCC 42149 / RIB 40) (Yellow koji mold).